The primary structure comprises 234 residues: Demethylmenaquinone methyltransferase (234 aa).

Residues Thr-58, Asp-79, and 106–107 contribute to the S-adenosyl-L-methionine site; that span reads NA.

This sequence belongs to the class I-like SAM-binding methyltransferase superfamily. MenG/UbiE family.

The enzyme catalyses a 2-demethylmenaquinol + S-adenosyl-L-methionine = a menaquinol + S-adenosyl-L-homocysteine + H(+). It participates in quinol/quinone metabolism; menaquinone biosynthesis; menaquinol from 1,4-dihydroxy-2-naphthoate: step 2/2. Methyltransferase required for the conversion of demethylmenaquinol (DMKH2) to menaquinol (MKH2). The protein is Demethylmenaquinone methyltransferase of Geobacillus stearothermophilus (Bacillus stearothermophilus).